Here is a 382-residue protein sequence, read N- to C-terminus: S-adenosylmethionine synthase (382 aa).

An ATP-binding site is contributed by His16. Asp18 contributes to the Mg(2+) binding site. Residue Glu44 coordinates K(+). Glu57 and Gln100 together coordinate L-methionine. Positions 100–110 (QSADIAMGVDE) are flexible loop. ATP-binding positions include 165-167 (DAK), Asp240, 246-247 (RK), Ala263, and Lys267. Residue Asp240 participates in L-methionine binding. Lys271 is an L-methionine binding site.

It belongs to the AdoMet synthase family. Homotetramer; dimer of dimers. The cofactor is Mg(2+). K(+) serves as cofactor.

The protein localises to the cytoplasm. It catalyses the reaction L-methionine + ATP + H2O = S-adenosyl-L-methionine + phosphate + diphosphate. Its pathway is amino-acid biosynthesis; S-adenosyl-L-methionine biosynthesis; S-adenosyl-L-methionine from L-methionine: step 1/1. Its function is as follows. Catalyzes the formation of S-adenosylmethionine (AdoMet) from methionine and ATP. The overall synthetic reaction is composed of two sequential steps, AdoMet formation and the subsequent tripolyphosphate hydrolysis which occurs prior to release of AdoMet from the enzyme. This is S-adenosylmethionine synthase from Saccharophagus degradans (strain 2-40 / ATCC 43961 / DSM 17024).